The sequence spans 705 residues: MADPASYRPAPGSIPETPGVYRFRDEHGRVLYVGKAKNLRARLANYFAELHTLHPRTQHMVSSASSVDWTVVSTEVEALQLEYTWIKQFDPRFNVRYRDDKSYPSLAVTLHEEFPRLQVMRGPKRKGVRYFGPYAHAWAIRETLDLLLRVFPARTCSGGVFKRAAQVGRPCLLGYIDRCSAPCVGRVDAATHREIVEDFCDFMSGQTGRYLRRLEREMQQAAQAQEYERAARLRDDIGALRRAVEKQAVVLPDGTDADVIAFAEDELEAAVAVFYVRGGRVRGQRGWVVDKLDEVTTADLVEQFLTQEYLDGTGAASTGTAGSTVPTTTAGSQGEGIPREILVPALPPDVEAVTELLGAARGSRVEVRVPRRGDKRTLLETVERNAKQAFALHRTKRASDLTARSRALAELQEALELPDAPLRIECFDVSNTQGTNVVASMVVFEDGLPRKSEYRRFAIRGIAGREGAGREGAGDDVASMYETIHRRFSRYLAERSRIADIADIAELGDIAGAPGAAQPIDPGTGRPRRFAYPPNLVVVDGGAPQVAAAARALDELGIDAGPGGVALCGLAKRLEEVWLPDTADPVILPRTSEALYLLQRVRDEAHRFAIAYHRQKRSTAMVASALDEVPGLGDTRRKALLRHFGSVAKIRAASAEQIAQVSGIGPRTAAAIVTALARSAPGRADAPAPVVDPRTGEILDTETVS.

Residues 16–95 enclose the GIY-YIG domain; it reads ETPGVYRFRD…IKQFDPRFNV (80 aa). The UVR domain occupies 208–243; the sequence is GRYLRRLEREMQQAAQAQEYERAARLRDDIGALRRA. A compositionally biased stretch (low complexity) spans 315–332; it reads AASTGTAGSTVPTTTAGS. 2 disordered regions span residues 315 to 335 and 683 to 705; these read AAST…SQGE and RADA…ETVS.

The protein belongs to the UvrC family. In terms of assembly, interacts with UvrB in an incision complex.

It localises to the cytoplasm. In terms of biological role, the UvrABC repair system catalyzes the recognition and processing of DNA lesions. UvrC both incises the 5' and 3' sides of the lesion. The N-terminal half is responsible for the 3' incision and the C-terminal half is responsible for the 5' incision. The polypeptide is UvrABC system protein C (Frankia casuarinae (strain DSM 45818 / CECT 9043 / HFP020203 / CcI3)).